The primary structure comprises 152 residues: Ubiquitin-conjugating enzyme E2 2 (152 aa).

Residues 4-150 (PARKRLMRDF…VREVVEQSWT (147 aa)) enclose the UBC core domain. Residue Cys88 is the Glycyl thioester intermediate of the active site.

The protein belongs to the ubiquitin-conjugating enzyme family.

The enzyme catalyses S-ubiquitinyl-[E1 ubiquitin-activating enzyme]-L-cysteine + [E2 ubiquitin-conjugating enzyme]-L-cysteine = [E1 ubiquitin-activating enzyme]-L-cysteine + S-ubiquitinyl-[E2 ubiquitin-conjugating enzyme]-L-cysteine.. It functions in the pathway protein modification; protein ubiquitination. Catalyzes the covalent attachment of ubiquitin to other proteins. In Triticum aestivum (Wheat), this protein is Ubiquitin-conjugating enzyme E2 2 (UBC2).